Here is a 279-residue protein sequence, read N- to C-terminus: Movement protein (279 aa).

The interval E247–L279 is disordered. Low complexity predominate over residues E254–S268.

Belongs to the cucumovirus movement protein family.

The protein localises to the host cell junction. Its subcellular location is the host plasmodesma. Transports viral genome to neighboring plant cells directly through plasmosdesmata, without any budding. The movement protein allows efficient cell to cell propagation, by bypassing the host cell wall barrier. Acts by forming a tubular structure at the host plasmodesmata, enlarging it enough to allow free passage of virion capsids. This Cucumis sativus (Cucumber) protein is Movement protein.